An 806-amino-acid polypeptide reads, in one-letter code: Leucine--tRNA ligase (806 aa).

The short motif at 40 to 51 (PYPSGAGLHVGH) is the 'HIGH' region element. A 'KMSKS' region motif is present at residues 578 to 582 (KMSKS). Lysine 581 is a binding site for ATP.

This sequence belongs to the class-I aminoacyl-tRNA synthetase family.

The protein localises to the cytoplasm. The enzyme catalyses tRNA(Leu) + L-leucine + ATP = L-leucyl-tRNA(Leu) + AMP + diphosphate. This Staphylococcus aureus (strain MSSA476) protein is Leucine--tRNA ligase.